Here is a 98-residue protein sequence, read N- to C-terminus: Large ribosomal subunit protein bL28 (98 aa).

This sequence belongs to the bacterial ribosomal protein bL28 family.

This is Large ribosomal subunit protein bL28 from Mesorhizobium japonicum (strain LMG 29417 / CECT 9101 / MAFF 303099) (Mesorhizobium loti (strain MAFF 303099)).